The following is a 192-amino-acid chain: Ribosome maturation factor RimP (192 aa).

The protein belongs to the RimP family.

It localises to the cytoplasm. Functionally, required for maturation of 30S ribosomal subunits. This chain is Ribosome maturation factor RimP, found in Delftia acidovorans (strain DSM 14801 / SPH-1).